The primary structure comprises 379 residues: DNA-directed RNA polymerase subunit Rpo1C (379 aa).

Belongs to the RNA polymerase beta' chain family. In terms of assembly, part of the RNA polymerase complex.

The protein resides in the cytoplasm. The enzyme catalyses RNA(n) + a ribonucleoside 5'-triphosphate = RNA(n+1) + diphosphate. Its function is as follows. DNA-dependent RNA polymerase (RNAP) catalyzes the transcription of DNA into RNA using the four ribonucleoside triphosphates as substrates. Forms part of the jaw domain. The protein is DNA-directed RNA polymerase subunit Rpo1C of Pyrobaculum aerophilum (strain ATCC 51768 / DSM 7523 / JCM 9630 / CIP 104966 / NBRC 100827 / IM2).